A 214-amino-acid polypeptide reads, in one-letter code: MRLGSAILGLLLLQGYSSQPTTTQTSQEILQKSSQVSLVSNQPVTPRSSTMDKQSLSLPDLMSFQPQKHTLGPGTGTPERSSSSSSSSSSRRGEASLDATPSPETTSLQTKKMTILLTILPTPTSESVLTVAAFGVISFIVILVVVVIILVSVVSLRFKCRKNKESEDPQKPGSSGLSESCSTANGEKDSITLISMRNINVNNSKGSMSAEKIL.

Positions 1-18 are cleaved as a signal peptide; the sequence is MRLGSAILGLLLLQGYSS. At 19–130 the chain is on the extracellular side; sequence QPTTTQTSQE…PTPTSESVLT (112 aa). Residues 23–107 form a disordered region; that stretch reads TQTSQEILQK…DATPSPETTS (85 aa). Over residues 28–57 the composition is skewed to polar residues; it reads EILQKSSQVSLVSNQPVTPRSSTMDKQSLS. The span at 80–90 shows a compositional bias: low complexity; sequence RSSSSSSSSSS. Residues 131–151 form a helical membrane-spanning segment; sequence VAAFGVISFIVILVVVVIILV. Over 152-214 the chain is Cytoplasmic; that stretch reads SVVSLRFKCR…KGSMSAEKIL (63 aa). Residues 163–184 form a disordered region; the sequence is NKESEDPQKPGSSGLSESCSTA. Polar residues predominate over residues 172 to 184; sequence PGSSGLSESCSTA. Serine 204 and serine 207 each carry phosphoserine.

It belongs to the ECSCR family. In terms of assembly, interacts with FLNA. Interacts with the 20S proteasome subunit PSMA7. Post-translationally, may be heavily O-glycosylated. Expressed in all tissues examined, highest expression was observed in lung and spleen endothelial cells.

It localises to the cell membrane. Its subcellular location is the cytoplasm. Regulates endothelial chemotaxis and tube formation. Has a role in angiogenesis and apoptosis via modulation of the actin cytoskeleton and facilitation of proteasomal degradation of the apoptosis inhibitors BIRC3/IAP1 and BIRC2/IAP2. This Mus musculus (Mouse) protein is Endothelial cell-specific chemotaxis regulator (Ecscr).